Reading from the N-terminus, the 241-residue chain is Sugar fermentation stimulation protein homolog (241 aa).

It belongs to the SfsA family.

This Yersinia enterocolitica serotype O:8 / biotype 1B (strain NCTC 13174 / 8081) protein is Sugar fermentation stimulation protein homolog.